The chain runs to 101 residues: Integration host factor subunit beta (101 aa).

Residues 58–101 (ARAGRNPRTGAHVPVDQKSVPFFKTGKEMRERLNRDTGAPDSGA) are disordered. Residues 82–92 (TGKEMRERLNR) are compositionally biased toward basic and acidic residues.

It belongs to the bacterial histone-like protein family. Heterodimer of an alpha and a beta chain.

Its function is as follows. This protein is one of the two subunits of integration host factor, a specific DNA-binding protein that functions in genetic recombination as well as in transcriptional and translational control. This chain is Integration host factor subunit beta, found in Rhodopseudomonas palustris (strain BisB18).